A 421-amino-acid chain; its full sequence is TITAN-like protein (421 aa).

The C2H2-type 1; degenerate zinc finger occupies 11–32 (EFCTVCRFHHDQGSRHKYFPRH). A C2H2-type 2; degenerate zinc finger spans residues 70-100 (VWCVFCDEDIVELGSSFACSKAINHFASSDH). Residues 279–306 (ISSSHSTDAGGNVHSGAPPPWLDANDGD) are disordered. Short sequence motifs (nuclear localization signal) lie at residues 328–335 (NRKLNPNR) and 377–384 (TRKESRKE). The segment at 376–421 (GTRKESRKEFEKEKRKLVKTESISTESEPVKIQPYISKRARRESGE) is disordered. Basic and acidic residues predominate over residues 377 to 389 (TRKESRKEFEKEK).

Also present in cotyledons, hypocotyls, stems, veins of sepals and stigmas, and actively dividing tissues such as shoot apical meristem, root tips and emerging true leaves. Weak expression in petals and anthers, and not detected in mature leaves. In seeds, expressed in both the endosperm and embryo.

Its subcellular location is the nucleus. In terms of biological role, key regulator for endosperm and embryo nuclear divisions. The chain is TITAN-like protein from Arabidopsis thaliana (Mouse-ear cress).